A 453-amino-acid polypeptide reads, in one-letter code: Glutamyl-tRNA(Gln) amidotransferase subunit A (453 aa).

Active-site charge relay system residues include Lys55 and Ser130. The active-site Acyl-ester intermediate is Ser154.

The protein belongs to the amidase family. GatA subfamily. Heterotrimer of A, B and C subunits.

The enzyme catalyses L-glutamyl-tRNA(Gln) + L-glutamine + ATP + H2O = L-glutaminyl-tRNA(Gln) + L-glutamate + ADP + phosphate + H(+). Functionally, allows the formation of correctly charged Gln-tRNA(Gln) through the transamidation of misacylated Glu-tRNA(Gln) in organisms which lack glutaminyl-tRNA synthetase. The reaction takes place in the presence of glutamine and ATP through an activated gamma-phospho-Glu-tRNA(Gln). The sequence is that of Glutamyl-tRNA(Gln) amidotransferase subunit A from Aliarcobacter butzleri (strain RM4018) (Arcobacter butzleri).